The chain runs to 525 residues: Peptide chain release factor 3 (525 aa).

Residues 9–276 (AKRRTFAIIS…GFTTYAPEPQ (268 aa)) enclose the tr-type G domain. Residues 18–25 (SHPDAGKT), 86–90 (DTPGH), and 140–143 (NKFD) contribute to the GTP site.

The protein belongs to the TRAFAC class translation factor GTPase superfamily. Classic translation factor GTPase family. PrfC subfamily.

It localises to the cytoplasm. Functionally, increases the formation of ribosomal termination complexes and stimulates activities of RF-1 and RF-2. It binds guanine nucleotides and has strong preference for UGA stop codons. It may interact directly with the ribosome. The stimulation of RF-1 and RF-2 is significantly reduced by GTP and GDP, but not by GMP. The polypeptide is Peptide chain release factor 3 (Francisella philomiragia subsp. philomiragia (strain ATCC 25017 / CCUG 19701 / FSC 153 / O#319-036)).